The primary structure comprises 261 residues: ATP synthase subunit a (261 aa).

8 consecutive transmembrane segments (helical) span residues 30 to 50, 63 to 83, 96 to 116, 125 to 145, 151 to 171, 187 to 207, 214 to 234, and 235 to 255; these read VLFTNSALWMVVAAITLGLFM, WQVAVEGFTGFISSMMMANIG, LFMFILFCNLLGMLPLGVLGL, IAITGVLALISFAIVLVVGFW, FFSLFVPHGTPLPMIPIIAPI, LFVAMTAGHVLLKVLSGFVIN, LWLGSIVSVLSFTLMIGISAL, and ELLVAGIQAYVFALLTSLYIN.

It belongs to the ATPase A chain family. As to quaternary structure, F-type ATPases have 2 components, CF(1) - the catalytic core - and CF(0) - the membrane proton channel. CF(1) has five subunits: alpha(3), beta(3), gamma(1), delta(1), epsilon(1). CF(0) has three main subunits: a(1), b(2) and c(9-12). The alpha and beta chains form an alternating ring which encloses part of the gamma chain. CF(1) is attached to CF(0) by a central stalk formed by the gamma and epsilon chains, while a peripheral stalk is formed by the delta and b chains.

Its subcellular location is the cell inner membrane. Its function is as follows. Key component of the proton channel; it plays a direct role in the translocation of protons across the membrane. In Sphingopyxis alaskensis (strain DSM 13593 / LMG 18877 / RB2256) (Sphingomonas alaskensis), this protein is ATP synthase subunit a.